The chain runs to 76 residues: MAYIFALIFAFVVCINTDVIQAEEIQHDTLRNMEYRLSCTPKNSECERMTDICCPGFQCLGCNPYDKNDVNKCKCQ.

The signal sequence occupies residues 1 to 22 (MAYIFALIFAFVVCINTDVIQA).

This sequence belongs to the scoloptoxin-13 family. Contains 4 disulfide bonds. In terms of tissue distribution, expressed by the venom gland.

It is found in the secreted. The sequence is that of U-scoloptoxin(13)-Sa1a from Scolopendra alternans (Florida Keys giant centipede).